A 408-amino-acid polypeptide reads, in one-letter code: Epsin-3 (408 aa).

Serine 2 carries the post-translational modification N-acetylserine. An ENTH domain is found at 24-157 (NVVFNYTEME…SDDNKIRAER (134 aa)). Residues 162 to 182 (ETAKKYKGVAGGSASADGSLN) are disordered. Residues serine 196, serine 198, serine 203, serine 212, and serine 223 each carry the phosphoserine modification. 2 disordered regions span residues 199-322 (ADFD…ITPA) and 338-408 (TAKA…LLSF). Positions 201–210 (FDSDNEDNED) are enriched in acidic residues. Positions 211-231 (GSFSQNGYNDNASRATSTPGQ) are enriched in polar residues. A compositionally biased stretch (basic and acidic residues) spans 249 to 263 (KPSKELIQEDEKKAD). Positions 264–273 (EEEDDDDEFS) are enriched in acidic residues. Polar residues predominate over residues 279-317 (VPVTNPANSFNLLNTSPIEGMPATTSSMPFYNSSTTDQG). Over residues 338–361 (TAKASAEAPSAPKASQAKAAASNP) the composition is skewed to low complexity. Polar residues-rich tracts occupy residues 362 to 371 (VSNSTTALST) and 388 to 398 (QQEQNTNNNHT). The segment covering 399 to 408 (SSKEIDLLSF) has biased composition (basic and acidic residues).

Interacts with the clathrin adapter GGA2, and VPS27.

The protein resides in the cytoplasm. It is found in the golgi apparatus. It localises to the trans-Golgi network membrane. Its subcellular location is the cytoplasmic vesicle. The protein localises to the clathrin-coated vesicle membrane. Its function is as follows. Involved in the recruitment of clathrin to the Golgi network and endosomes to form clathrin coated vesicles. Plays a role in the trafficking of clathrin between the Golgi network and endosomes. Binds to membranes enriched in phosphatidylinositol-3,5-bisphosphate (PtdIns(3,5)P2) and, in association with VPS27, is involved in protein sorting at the multivesicular body (MVB). The protein is Epsin-3 (ENT3) of Saccharomyces cerevisiae (strain ATCC 204508 / S288c) (Baker's yeast).